The sequence spans 296 residues: tRNA dimethylallyltransferase (296 aa).

Position 8–15 (8–15) interacts with ATP; sequence GPTGSGKT. 10 to 15 provides a ligand contact to substrate; that stretch reads TGSGKT. The interval 32-35 is interaction with substrate tRNA; sequence DSRQ.

It belongs to the IPP transferase family. In terms of assembly, monomer. Requires Mg(2+) as cofactor.

The catalysed reaction is adenosine(37) in tRNA + dimethylallyl diphosphate = N(6)-dimethylallyladenosine(37) in tRNA + diphosphate. In terms of biological role, catalyzes the transfer of a dimethylallyl group onto the adenine at position 37 in tRNAs that read codons beginning with uridine, leading to the formation of N6-(dimethylallyl)adenosine (i(6)A). In Leptospira biflexa serovar Patoc (strain Patoc 1 / Ames), this protein is tRNA dimethylallyltransferase.